The chain runs to 375 residues: Succinyl-diaminopimelate desuccinylase (375 aa).

H66 serves as a coordination point for Zn(2+). D68 is a catalytic residue. D99 is a binding site for Zn(2+). Catalysis depends on E133, which acts as the Proton acceptor. Positions 134, 162, and 348 each coordinate Zn(2+).

The protein belongs to the peptidase M20A family. DapE subfamily. Homodimer. It depends on Zn(2+) as a cofactor. Co(2+) serves as cofactor.

The enzyme catalyses N-succinyl-(2S,6S)-2,6-diaminopimelate + H2O = (2S,6S)-2,6-diaminopimelate + succinate. It functions in the pathway amino-acid biosynthesis; L-lysine biosynthesis via DAP pathway; LL-2,6-diaminopimelate from (S)-tetrahydrodipicolinate (succinylase route): step 3/3. Catalyzes the hydrolysis of N-succinyl-L,L-diaminopimelic acid (SDAP), forming succinate and LL-2,6-diaminopimelate (DAP), an intermediate involved in the bacterial biosynthesis of lysine and meso-diaminopimelic acid, an essential component of bacterial cell walls. The chain is Succinyl-diaminopimelate desuccinylase from Buchnera aphidicola subsp. Acyrthosiphon pisum (strain APS) (Acyrthosiphon pisum symbiotic bacterium).